We begin with the raw amino-acid sequence, 144 residues long: Large ribosomal subunit protein uL15 (144 aa).

A disordered region spans residues 1-53 (MRLNTLSPAEGSKHASKRPGRGIGSGLGKTGGRGHKGQKSRSGGGVRRGFEGG). Over residues 21–31 (RGIGSGLGKTG) the composition is skewed to gly residues.

The protein belongs to the universal ribosomal protein uL15 family. In terms of assembly, part of the 50S ribosomal subunit.

Binds to the 23S rRNA. The protein is Large ribosomal subunit protein uL15 of Sodalis glossinidius (strain morsitans).